A 285-amino-acid chain; its full sequence is Bifunctional protein FolD (285 aa).

NADP(+) contacts are provided by residues 165-167 and Ser190; that span reads GRS.

The protein belongs to the tetrahydrofolate dehydrogenase/cyclohydrolase family. Homodimer.

It catalyses the reaction (6R)-5,10-methylene-5,6,7,8-tetrahydrofolate + NADP(+) = (6R)-5,10-methenyltetrahydrofolate + NADPH. The enzyme catalyses (6R)-5,10-methenyltetrahydrofolate + H2O = (6R)-10-formyltetrahydrofolate + H(+). The protein operates within one-carbon metabolism; tetrahydrofolate interconversion. In terms of biological role, catalyzes the oxidation of 5,10-methylenetetrahydrofolate to 5,10-methenyltetrahydrofolate and then the hydrolysis of 5,10-methenyltetrahydrofolate to 10-formyltetrahydrofolate. The protein is Bifunctional protein FolD of Burkholderia ambifaria (strain ATCC BAA-244 / DSM 16087 / CCUG 44356 / LMG 19182 / AMMD) (Burkholderia cepacia (strain AMMD)).